Reading from the N-terminus, the 445-residue chain is GTPase Der (445 aa).

EngA-type G domains lie at 3 to 167 (PVIA…YAGQ) and 180 to 353 (VKIA…AAAM). GTP-binding positions include 9 to 16 (GRPNVGKS), 56 to 60 (DTGGF), 119 to 122 (NKAE), 186 to 193 (GRPNVGKS), 233 to 237 (DTAGL), and 298 to 301 (NKWD). The 85-residue stretch at 354–438 (AKLPTPKLTR…PLRIEFRSST (85 aa)) folds into the KH-like domain.

Belongs to the TRAFAC class TrmE-Era-EngA-EngB-Septin-like GTPase superfamily. EngA (Der) GTPase family. Associates with the 50S ribosomal subunit.

GTPase that plays an essential role in the late steps of ribosome biogenesis. This is GTPase Der from Paraburkholderia xenovorans (strain LB400).